Reading from the N-terminus, the 332-residue chain is Cell growth regulator with RING finger domain protein 1 (332 aa).

The RING-type zinc finger occupies 274-309; the sequence is CVVCQNGGVNWVLLPCRHACLCDSCVCYFKQCPMCR.

Highly expressed in testis, lower levels of expression is seen in skeletal muscle, liver, lung and brain.

It is found in the nucleus. The protein resides in the endoplasmic reticulum. In terms of biological role, able to inhibit growth in several cell lines. The chain is Cell growth regulator with RING finger domain protein 1 (Cgrrf1) from Rattus norvegicus (Rat).